Reading from the N-terminus, the 227-residue chain is Cytochrome c oxidase subunit 2 (227 aa).

Residues 1–14 (MAYPFQLGLQDATS) lie on the Mitochondrial intermembrane side of the membrane. A helical transmembrane segment spans residues 15–45 (PIMEELTNFHDHTLMIVFLISTLVLYIISLM). The Mitochondrial matrix portion of the chain corresponds to 46–59 (LTTKLTHTSTMDAQ). Residues 60–87 (EVETIWTILPAVILILIALPSLRILYMM) traverse the membrane as a helical segment. Topologically, residues 88-227 (DEINNPVLTV…YFENWSASMI (140 aa)) are mitochondrial intermembrane. Cu cation contacts are provided by His161, Cys196, Glu198, Cys200, His204, and Met207. Glu198 contacts Mg(2+). Tyr218 carries the post-translational modification Phosphotyrosine.

The protein belongs to the cytochrome c oxidase subunit 2 family. Component of the cytochrome c oxidase (complex IV, CIV), a multisubunit enzyme composed of 14 subunits. The complex is composed of a catalytic core of 3 subunits MT-CO1, MT-CO2 and MT-CO3, encoded in the mitochondrial DNA, and 11 supernumerary subunits COX4I, COX5A, COX5B, COX6A, COX6B, COX6C, COX7A, COX7B, COX7C, COX8 and NDUFA4, which are encoded in the nuclear genome. The complex exists as a monomer or a dimer and forms supercomplexes (SCs) in the inner mitochondrial membrane with NADH-ubiquinone oxidoreductase (complex I, CI) and ubiquinol-cytochrome c oxidoreductase (cytochrome b-c1 complex, complex III, CIII), resulting in different assemblies (supercomplex SCI(1)III(2)IV(1) and megacomplex MCI(2)III(2)IV(2)). Found in a complex with TMEM177, COA6, COX18, COX20, SCO1 and SCO2. Interacts with TMEM177 in a COX20-dependent manner. Interacts with COX20. Interacts with COX16. Requires Cu cation as cofactor.

Its subcellular location is the mitochondrion inner membrane. It catalyses the reaction 4 Fe(II)-[cytochrome c] + O2 + 8 H(+)(in) = 4 Fe(III)-[cytochrome c] + 2 H2O + 4 H(+)(out). In terms of biological role, component of the cytochrome c oxidase, the last enzyme in the mitochondrial electron transport chain which drives oxidative phosphorylation. The respiratory chain contains 3 multisubunit complexes succinate dehydrogenase (complex II, CII), ubiquinol-cytochrome c oxidoreductase (cytochrome b-c1 complex, complex III, CIII) and cytochrome c oxidase (complex IV, CIV), that cooperate to transfer electrons derived from NADH and succinate to molecular oxygen, creating an electrochemical gradient over the inner membrane that drives transmembrane transport and the ATP synthase. Cytochrome c oxidase is the component of the respiratory chain that catalyzes the reduction of oxygen to water. Electrons originating from reduced cytochrome c in the intermembrane space (IMS) are transferred via the dinuclear copper A center (CU(A)) of subunit 2 and heme A of subunit 1 to the active site in subunit 1, a binuclear center (BNC) formed by heme A3 and copper B (CU(B)). The BNC reduces molecular oxygen to 2 water molecules using 4 electrons from cytochrome c in the IMS and 4 protons from the mitochondrial matrix. The chain is Cytochrome c oxidase subunit 2 (MT-CO2) from Leopoldamys sabanus (Long-tailed giant rat).